The sequence spans 227 residues: Chloronitrobenzene nitroreductase (227 aa).

Residue 14–18 participates in FMN binding; sequence RRTKR. Position 44 (Ser44) interacts with NADP(+). FMN contacts are provided by residues 172–173 and Arg215; that span reads GL.

This sequence belongs to the nitroreductase family. It depends on FMN as a cofactor.

It catalyses the reaction N-phenylhydroxylamine + 2 NADP(+) + H2O = nitrobenzene + 2 NADPH + 2 H(+). The protein operates within xenobiotic degradation; nitrobenzene degradation. It participates in xenobiotic degradation; 4-chloronitrobenzene degradation. In terms of biological role, involved in the biodegradation of chlorinated nitroaromatic compounds. Catalyzes the reduction of 4-chloronitrobenzene to yield 1-hydroxylamino-4-chlorobenzene. Probably also able to catalyze the two-electron reduction of nitrobenzene (NB) to produce a nitrosobenzene (NOB) intermediate, which is immediately reduced to hydroxylaminobenzene (HAB) by a second two-electron transfer. In Comamonas testosteroni (Pseudomonas testosteroni), this protein is Chloronitrobenzene nitroreductase.